A 350-amino-acid chain; its full sequence is Probable deoxyhypusine synthase (350 aa).

NAD(+) contacts are provided by residues 96–100, 122–124, E128, and D229; these read SNLIS and TAG. 127-128 contributes to the spermidine binding site; sequence EE. D234 provides a ligand contact to spermidine. NAD(+) is bound at residue G276. A spermidine-binding site is contributed by H281. Residue 301–302 coordinates NAD(+); sequence SA. Spermidine-binding positions include 307–309 and 316–322; these read GSD and EAVSWGK. The Nucleophile role is filled by K322. An NAD(+)-binding site is contributed by 335 to 336; it reads EV.

This sequence belongs to the deoxyhypusine synthase family. NAD(+) serves as cofactor.

The catalysed reaction is [eIF5A protein]-L-lysine + spermidine = [eIF5A protein]-deoxyhypusine + propane-1,3-diamine. It functions in the pathway protein modification; eIF5A hypusination. Functionally, catalyzes the NAD-dependent oxidative cleavage of spermidine and the subsequent transfer of the butylamine moiety of spermidine to the epsilon-amino group of a specific lysine residue of the eIF-5A precursor protein to form the intermediate deoxyhypusine residue. This is Probable deoxyhypusine synthase from Schizosaccharomyces pombe (strain 972 / ATCC 24843) (Fission yeast).